A 309-amino-acid polypeptide reads, in one-letter code: MEMO1 family protein C4H3.04c (309 aa).

Belongs to the MEMO1 family.

The polypeptide is MEMO1 family protein C4H3.04c (Schizosaccharomyces pombe (strain 972 / ATCC 24843) (Fission yeast)).